We begin with the raw amino-acid sequence, 399 residues long: MRAVLELTRRRARNARFARARAVVGARARAADAQELRDDSKGGSSVDKATSTAAEARETAHTLEGFREALRHGPGFDDFVRGDVAYSVPAPKSLKDKTTRKPAWLKREVPGGERYTEIKSKLRELKLATVCEEAKCPNLGECWGGGDGKTATATIMIMGDTCTRGCRFCAVKTAKAPPPLDKDEPANVSKAIAAWGLDYVVLTSVDRDDIEDQGAGHFRETVQRLKASCDVLVEALTPDFRGEKHLVELVATSGLDVFAHNVETVPELQRDVRDRRANWDQSIEVLKHAKKSGAKITKTSIMLGLGETHEQVVNALKLLREADVDVVTFGQYMRPTKKHLAVVEYVTPEAFKRYQEIAEEMGFLYVASGAMVRSSYKAGEFFLANVIKQRKAKEAAAAN.

Residues M1 to A30 constitute a mitochondrion transit peptide. Residues A31–K41 are compositionally biased toward basic and acidic residues. The disordered stretch occupies residues A31 to E58. Positions 131, 136, 142, 162, 166, 169, and 375 each coordinate [4Fe-4S] cluster. Residues G145 to L364 form the Radical SAM core domain.

It belongs to the radical SAM superfamily. Lipoyl synthase family. The cofactor is [4Fe-4S] cluster.

It is found in the mitochondrion. The enzyme catalyses [[Fe-S] cluster scaffold protein carrying a second [4Fe-4S](2+) cluster] + N(6)-octanoyl-L-lysyl-[protein] + 2 oxidized [2Fe-2S]-[ferredoxin] + 2 S-adenosyl-L-methionine + 4 H(+) = [[Fe-S] cluster scaffold protein] + N(6)-[(R)-dihydrolipoyl]-L-lysyl-[protein] + 4 Fe(3+) + 2 hydrogen sulfide + 2 5'-deoxyadenosine + 2 L-methionine + 2 reduced [2Fe-2S]-[ferredoxin]. Its pathway is protein modification; protein lipoylation via endogenous pathway; protein N(6)-(lipoyl)lysine from octanoyl-[acyl-carrier-protein]: step 2/2. Its function is as follows. Catalyzes the radical-mediated insertion of two sulfur atoms into the C-6 and C-8 positions of the octanoyl moiety bound to the lipoyl domains of lipoate-dependent enzymes, thereby converting the octanoylated domains into lipoylated derivatives. In Ostreococcus lucimarinus (strain CCE9901), this protein is Lipoyl synthase, mitochondrial.